The chain runs to 207 residues: MDLNIKSLAGQEAGSLGVAEGVFAADYNEALIHQVVVAYMAGARQGTKAQKTRSEVSGGGAKPWRQKGTGRARAGTIRSPIFRKGGVTFAAKPKSYKQKVNRKMYSGAVKSILSELLRLGRMTIVEELKLETPKTREFKSVIDSLGVKDVLFVVGVEEFSENLYLSSRNLKNVAVCDSVEINPVSLVCFENVVLTKKAIKEIEEKLV.

The segment at 48–70 (KAQKTRSEVSGGGAKPWRQKGTG) is disordered.

It belongs to the universal ribosomal protein uL4 family. Part of the 50S ribosomal subunit.

In terms of biological role, one of the primary rRNA binding proteins, this protein initially binds near the 5'-end of the 23S rRNA. It is important during the early stages of 50S assembly. It makes multiple contacts with different domains of the 23S rRNA in the assembled 50S subunit and ribosome. Forms part of the polypeptide exit tunnel. The polypeptide is Large ribosomal subunit protein uL4 (Francisella tularensis subsp. mediasiatica (strain FSC147)).